The primary structure comprises 1191 residues: Pyruvate-flavodoxin oxidoreductase (1191 aa).

4Fe-4S ferredoxin-type domains lie at 687-716 (QVCS…VKAV) and 744-773 (YVLA…TGAR). Residues C696, C699, C702, C706, C753, C756, C759, C763, C825, C828, C853, and C1085 each contribute to the [4Fe-4S] cluster site.

It belongs to the pyruvate:ferredoxin/flavodoxin oxidoreductase family. It depends on [4Fe-4S] cluster as a cofactor.

The catalysed reaction is oxidized [flavodoxin] + pyruvate + CoA + 2 H(+) = reduced [flavodoxin] + acetyl-CoA + CO2. In terms of biological role, oxidoreductase required for the transfer of electrons from pyruvate to flavodoxin, which reduces nitrogenase. The protein is Pyruvate-flavodoxin oxidoreductase (nifJ) of Rhodospirillum rubrum (strain ATCC 11170 / ATH 1.1.1 / DSM 467 / LMG 4362 / NCIMB 8255 / S1).